We begin with the raw amino-acid sequence, 208 residues long: LysM and putative peptidoglycan-binding domain-containing protein 2 (208 aa).

The tract at residues 1 to 54 is disordered; sequence MAEFSPVLPPLRDDGGGGRYGQPLFPRSRSGSESDSELSQSLARTKTRSYGSTA. A compositionally biased stretch (low complexity) spans 27–42; it reads RSRSGSESDSELSQSL. The LysM domain maps to 65 to 109; sequence IEHRVTDGETLQGIALKYGVTMEQIKRVNKLFSNDCIFLRNTLSI. Disordered regions lie at residues 122–169 and 187–208; these read LSLE…EELS and AARK…YQEI. The segment covering 129–140 has biased composition (polar residues); sequence SEGNTPQESPCV. The segment covering 147–156 has biased composition (pro residues); it reads PSPPPEPSVP.

The polypeptide is LysM and putative peptidoglycan-binding domain-containing protein 2 (lysmd2) (Danio rerio (Zebrafish)).